Consider the following 231-residue polypeptide: uncharacterized protein (231 aa).

Residues 4 to 116 (RILVVEDDED…ELHARVIAQL (113 aa)) enclose the Response regulatory domain. Aspartate 52 carries the 4-aspartylphosphate modification. The segment at residues 129 to 230 (EETFLIGGKL…EWGRGYRFGA (102 aa)) is a DNA-binding region (ompR/PhoB-type).

Post-translationally, phosphorylated by YrkQ.

It is found in the cytoplasm. Functionally, member of the two-component regulatory system YrkQ/YrkP. This is an uncharacterized protein from Bacillus subtilis (strain 168).